We begin with the raw amino-acid sequence, 564 residues long: Protein NRT1/ PTR FAMILY 5.16 (564 aa).

The next 2 membrane-spanning stretches (helical) occupy residues 49–69 (FAYFGIGSNLITYLTGPLGQS) and 80–100 (WSGTASILPVLGAFIADAYLG). Thr-104 carries the post-translational modification Phosphothreonine. 10 helical membrane passes run 110–130 (LIYILGLGLLTLSSILILMGL), 145–165 (FFWVNILFFCSLYLVAIGQGG), 192–212 (FFNWWFLSLSAGITLSIIVVV), 220–240 (WALGFGIPCLFMVMALALFLF), 327–347 (IPIWITSVVSTIPYAQYATFF), 358–378 (ILPGFEIPPASFQALIGLSIF), 408–428 (IGAGMVLSSLNMVVAALVEMK), 450–470 (IWWFVPQYLLLGMIDVFSLVG), 486–506 (IGLALSLSAMGLASFLSGFLI), and 533–553 (YFYWLLAAFTAIGFLAFLLLS).

The protein belongs to the major facilitator superfamily. Proton-dependent oligopeptide transporter (POT/PTR) (TC 2.A.17) family. Expressed in shoots and roots.

It localises to the membrane. This chain is Protein NRT1/ PTR FAMILY 5.16 (NPF5.16), found in Arabidopsis thaliana (Mouse-ear cress).